A 324-amino-acid chain; its full sequence is Glyoxylate/hydroxypyruvate reductase B (324 aa).

Residues arginine 237 and glutamate 266 contribute to the active site. The active-site Proton donor is histidine 285.

Belongs to the D-isomer specific 2-hydroxyacid dehydrogenase family. GhrB subfamily. In terms of assembly, homodimer.

The protein localises to the cytoplasm. The catalysed reaction is glycolate + NADP(+) = glyoxylate + NADPH + H(+). It carries out the reaction (R)-glycerate + NAD(+) = 3-hydroxypyruvate + NADH + H(+). The enzyme catalyses (R)-glycerate + NADP(+) = 3-hydroxypyruvate + NADPH + H(+). Functionally, catalyzes the NADPH-dependent reduction of glyoxylate and hydroxypyruvate into glycolate and glycerate, respectively. In Cronobacter sakazakii (strain ATCC BAA-894) (Enterobacter sakazakii), this protein is Glyoxylate/hydroxypyruvate reductase B.